Here is a 134-residue protein sequence, read N- to C-terminus: Probable glycine cleavage system H protein (134 aa).

A Lipoyl-binding domain is found at Thr-29–Lys-110. Residue Lys-70 is modified to N6-lipoyllysine.

It belongs to the GcvH family. In terms of assembly, the glycine cleavage system is composed of four proteins: P, T, L and H. It depends on (R)-lipoate as a cofactor.

In terms of biological role, the glycine cleavage system catalyzes the degradation of glycine. The H protein shuttles the methylamine group of glycine from the P protein to the T protein. This is Probable glycine cleavage system H protein from Thermococcus gammatolerans (strain DSM 15229 / JCM 11827 / EJ3).